The chain runs to 189 residues: GTPase HRas (189 aa).

10–17 (GARGVGKS) is a binding site for GTP. The short motif at 32-40 (YDPTIEDSY) is the Effector region element. GTP contacts are provided by residues 57–61 (DTAGQ) and 116–119 (NKCD). 2 S-palmitoyl cysteine; by host lipidation sites follow: C181 and C184. C186 is modified (cysteine methyl ester; by host). The S-farnesyl cysteine; by host moiety is linked to residue C186. Residues 187–189 (VLS) constitute a propeptide, removed in mature form.

Belongs to the small GTPase superfamily. Ras family.

Its subcellular location is the host cell membrane. It carries out the reaction GTP + H2O = GDP + phosphate + H(+). With respect to regulation, alternates between an inactive form bound to GDP and an active form bound to GTP. Activated by a guanine nucleotide-exchange factor (GEF) and inactivated by a GTPase-activating protein (GAP). The polypeptide is GTPase HRas (H-RAS) (Mus musculus (Mouse)).